A 259-amino-acid polypeptide reads, in one-letter code: Proteasome subunit beta type-4 (259 aa).

This sequence belongs to the peptidase T1B family. The 26S proteasome consists of a 20S proteasome core and two 19S regulatory subunits. The 20S proteasome core is composed of 28 subunits that are arranged in four stacked rings, resulting in a barrel-shaped structure. The two end rings are each formed by seven alpha subunits, and the two central rings are each formed by seven beta subunits. The catalytic chamber with the active sites is on the inside of the barrel.

It is found in the cytoplasm. Its subcellular location is the nucleus. Non-catalytic component of the proteasome, a multicatalytic proteinase complex which is characterized by its ability to cleave peptides with Arg, Phe, Tyr, Leu, and Glu adjacent to the leaving group at neutral or slightly basic pH. The proteasome has an ATP-dependent proteolytic activity. In Dictyostelium discoideum (Social amoeba), this protein is Proteasome subunit beta type-4 (psmB4-1).